We begin with the raw amino-acid sequence, 427 residues long: Ectonucleoside triphosphate diphosphohydrolase 5 (427 aa).

A signal peptide spans 1–24; it reads MATSWGAVFMLIIACVGSTVFYRE. The active-site Proton acceptor is Glu-171. N-linked (GlcNAc...) asparagine glycosylation occurs at Asn-231. Disulfide bonds link Cys-271/Cys-302 and Cys-362/Cys-376.

It belongs to the GDA1/CD39 NTPase family. In terms of assembly, monomer; active form. Homodimer; disulfide-linked. Homodimers are enzymatically inactive. Ca(2+) serves as cofactor. It depends on Mg(2+) as a cofactor. N-glycosylated; high-mannose type. As to expression, ubiquitous.

Its subcellular location is the endoplasmic reticulum. It is found in the secreted. It catalyses the reaction a ribonucleoside 5'-diphosphate + H2O = a ribonucleoside 5'-phosphate + phosphate + H(+). The catalysed reaction is GDP + H2O = GMP + phosphate + H(+). It carries out the reaction UDP + H2O = UMP + phosphate + H(+). The enzyme catalyses IDP + H2O = IMP + phosphate + H(+). It catalyses the reaction CDP + H2O = CMP + phosphate + H(+). The catalysed reaction is ADP + H2O = AMP + phosphate + H(+). The protein operates within protein modification; protein glycosylation. In terms of biological role, hydrolyzes nucleoside diphosphates with a preference for GDP, IDP and UDP compared to ADP and CDP. In the lumen of the endoplasmic reticulum, hydrolyzes UDP that acts as an end-product feedback inhibitor of the UDP-Glc:glycoprotein glucosyltransferases. UMP can be transported back by an UDP-sugar antiporter to the cytosol where it is consumed to regenerate UDP-glucose. Therefore, it positively regulates protein reglucosylation by clearing UDP from the ER lumen and by promoting the regeneration of UDP-glucose. Protein reglucosylation is essential to proper glycoprotein folding and quality control in the ER. In Mus musculus (Mouse), this protein is Ectonucleoside triphosphate diphosphohydrolase 5 (Entpd5).